The primary structure comprises 339 residues: Centromere protein N (339 aa).

A phosphoserine mark is found at Ser226, Ser235, and Ser282.

This sequence belongs to the CENP-N/CHL4 family. In terms of assembly, component of the CENPA-NAC complex, at least composed of CENPA, CENPC, CENPH, CENPM, CENPN, CENPT and CENPU. The CENPA-NAC complex interacts with the CENPA-CAD complex, composed of CENPI, CENPK, CENPL, CENPO, CENPP, CENPQ, CENPR and CENPS. Interacts directly with CENPA. Identified in a centromere complex containing histones H2A, H2B and H4, and at least CENPA, CENPB, CENPC, CENPT, CENPN, HJURP, SUPT16H, SSRP1 and RSF1.

It is found in the nucleus. Its subcellular location is the chromosome. It localises to the centromere. The protein localises to the kinetochore. Component of the CENPA-NAC (nucleosome-associated) complex, a complex that plays a central role in assembly of kinetochore proteins, mitotic progression and chromosome segregation. The CENPA-NAC complex recruits the CENPA-CAD (nucleosome distal) complex and may be involved in incorporation of newly synthesized CENPA into centromeres. CENPN is the first protein to bind specifically to CENPA nucleosomes and the direct binding of CENPA nucleosomes by CENPN is required for centromere assembly. Required for chromosome congression and efficiently align the chromosomes on a metaphase plate. The protein is Centromere protein N (CENPN) of Homo sapiens (Human).